Here is a 3387-residue protein sequence, read N- to C-terminus: Genome polyprotein (3387 aa).

Residues 1–100 (MNQRKKVVRP…LNILNGRKRS (100 aa)) are Cytoplasmic-facing. The segment at 36-71 (LFSGKGPLRMVLAFITFLRVLSIPPTAGILKRWGQL) is hydrophobic; homodimerization of capsid protein C. The propeptide at 100–113 (STVTLLCLIPTVMA) is ER anchor for the capsid protein C, removed in mature form by serine protease NS3. A helical transmembrane segment spans residues 101-117 (TVTLLCLIPTVMAFHLS). The Extracellular segment spans residues 118–237 (TRDGEPLMIV…GAWKHAQRVE (120 aa)). N182 is a glycosylation site (N-linked (GlcNAc...) asparagine; by host). The helical transmembrane segment at 238–258 (SWILRNPGFALLAGFMAYMIG) threads the bilayer. At 259-265 (QTGIQRT) the chain is on the cytoplasmic side. Residues 266–279 (VFFVLMMLVAPSYG) form a helical membrane-spanning segment. At 280–725 (MRCIGVGNRD…HQVFGSVYTT (446 aa)) the chain is on the extracellular side. Disulfide bonds link C282/C309, C339/C400, C353/C384, and C371/C395. N-linked (GlcNAc...) asparagine; by host glycosylation occurs at N346. The segment at 377–390 (DRGWGNGCGLFGKG) is fusion peptide. N-linked (GlcNAc...) asparagine; by host glycosylation occurs at N432. 2 disulfides stabilise this stretch: C464-C564 and C581-C612. A helical membrane pass occupies residues 726–746 (MFGGVSWMVRILIGLLVLWIG). Topologically, residues 747–751 (TNSRN) are cytoplasmic. Residues 752–772 (TPMAMTCIAVGGITLFLGFTV) form a helical membrane-spanning segment. Over 773–1193 (QADMGCVVSW…IMLGDTMLSR (421 aa)) the chain is Extracellular. Disulfide bonds link C778–C789, C829–C917, C953–C997, C1054–C1103, C1065–C1087, and C1086–C1090. Residues N904 and N981 are each glycosylated (N-linked (GlcNAc...) asparagine; by host). The helical transmembrane segment at 1194-1218 (VGGQTHLAIMIVFKMSPGYVLGVFL) threads the bilayer. The Lumenal portion of the chain corresponds to 1219-1224 (RKLTSR). A helical membrane pass occupies residues 1225–1243 (ETALMVIGMAMTTVFSIPH). Residues 1244-1267 (DLMELIDGISLGLILLKMVTHFDN) lie on the Cytoplasmic side of the membrane. The chain crosses the membrane as a helical span at residues 1268 to 1288 (TQVGTLALSLTFIRSTMPLTM). Residue A1289 is a topological domain, lumenal. A helical membrane pass occupies residues 1290–1308 (WRTIMAVLFAVTLIPLCRT). Residues 1309-1316 (SCLQKQSH) are Lumenal-facing. Residues 1317–1337 (WVEITAIILGAQALPVYLMTL) traverse the membrane as a helical segment. The Cytoplasmic portion of the chain corresponds to 1338-1345 (MKGASKRS). Residues 1346–1366 (WPLNEGIMAVGLVSLLGSALL) traverse the membrane as a helical segment. Residues 1367–1369 (KND) are Lumenal-facing. The chain crosses the membrane as a helical span at residues 1370 to 1390 (VPLAGPMVAGGLLLAAYVMSG). Topologically, residues 1391 to 1444 (SSADLSLERAANVQWDEMADITGSSPIIEVKQDEDGSFSIRDVEETNMITLLVK) are cytoplasmic. The tract at residues 1397 to 1436 (LERAANVQWDEMADITGSSPIIEVKQDEDGSFSIRDVEET) is interacts with and activates NS3 protease. The segment at residues 1445-1465 (LALITVSGLYPLAIPITMTLW) is an intramembrane region (helical). Residues 1466 to 2146 (YMWQVRTQRS…LNELPESLET (681 aa)) lie on the Cytoplasmic side of the membrane. The Peptidase S7 domain occupies 1475-1652 (SGALWDVPSP…ERIGEPDYEV (178 aa)). Catalysis depends on charge relay system; for serine protease NS3 activity residues H1525, D1549, and S1609. One can recognise a Helicase ATP-binding domain in the interval 1654 to 1810 (EDIFRKKRLT…QSNSPIEDIE (157 aa)). An important for RNA-binding region spans residues 1658-1661 (RKKR). Residue 1667–1674 (LHPGAGKT) coordinates ATP. Positions 1758–1761 (DEAH) match the DEAH box motif. A Helicase C-terminal domain is found at 1820–1987 (TGFDWITDYQ…IIPTLFGPER (168 aa)). K1862 is subject to N6-acetyllysine; by host. The chain crosses the membrane as a helical span at residues 2147-2167 (LMLVALLGAMTAGIFLFFMQG). The Lumenal portion of the chain corresponds to 2168-2169 (KG). Positions 2170 to 2190 (IGKLSVGLIAIAVASGLLWVA) form an intramembrane region, helical. Residue E2191 is a topological domain, lumenal. The chain crosses the membrane as a helical span at residues 2192-2212 (IQPQWIAASIILEFFLMVLLI). Residues 2213–2225 (PEPEKQRTPQDNQ) are Cytoplasmic-facing. The helical transmembrane segment at 2226–2246 (LIYVILAILTIIGLVAANEMG) threads the bilayer. Residues 2247–2270 (LIEKTKADFGFYQVKTETTILDVD) are Lumenal-facing. The helical intramembrane region spans 2271-2291 (LRPASAWTLYAVATTILTPML). Residues 2292 to 2301 (RHTIENTSAN) lie on the Lumenal side of the membrane. N-linked (GlcNAc...) asparagine; by host glycans are attached at residues N2297 and N2301. An intramembrane region (helical) is located at residues 2302–2322 (LSLAAIANQAAVLMGLGKGWP). At 2323–2343 (LHRMDLGVPLLAMGCYSQVNP) the chain is on the lumenal side. A helical transmembrane segment spans residues 2344–2364 (TTLTASLVMLLVHYAIIGPGL). Residues 2365–2409 (QAKATREAQKRTAAGIMKNPTVDGITVIDLEPISYDPKFEKQLGQ) are Cytoplasmic-facing. The helical transmembrane segment at 2410–2430 (VMLLVLCAGQLLLMRTTWAFC) threads the bilayer. Over 2431 to 2455 (EVLTLATGPVLTLWEGNPGRFWNTT) the chain is Lumenal. A glycan (N-linked (GlcNAc...) asparagine; by host) is linked at N2453. A helical membrane pass occupies residues 2456-2476 (IAVSTANIFRGSYLAGAGLAF). Topologically, residues 2477 to 3387 (SLIKNAQTPR…SALSESEGVL (911 aa)) are cytoplasmic. In terms of domain architecture, mRNA cap 0-1 NS5-type MT spans 2489 to 2751 (TGTTGETLGE…DVDLGAGTRS (263 aa)). S-adenosyl-L-methionine is bound at residue S2543. S2543 is modified (phosphoserine). K2548 (for 2'-O-MTase activity) is an active-site residue. The short motif at 2564–2567 (VVDL) is the SUMO-interacting motif element. Positions 2573, 2574, 2591, 2592, 2618, and 2619 each coordinate S-adenosyl-L-methionine. The active-site For 2'-O-MTase activity is the D2633. An S-adenosyl-L-methionine-binding site is contributed by I2634. Active-site for 2'-O-MTase activity residues include K2668 and E2704. Y2706 contributes to the S-adenosyl-L-methionine binding site. Zn(2+)-binding residues include E2925, H2929, C2934, and C2937. The 151-residue stretch at 3016-3166 (LMYADDTAGW…PLDERFSTSL (151 aa)) folds into the RdRp catalytic domain. Zn(2+)-binding residues include H3200, C3216, and C3335.

In the N-terminal section; belongs to the class I-like SAM-binding methyltransferase superfamily. mRNA cap 0-1 NS5-type methyltransferase family. As to quaternary structure, homodimer. Interacts (via N-terminus) with host EXOC1 (via C-terminus); this interaction results in EXOC1 degradation through the proteasome degradation pathway. Forms heterodimers with envelope protein E in the endoplasmic reticulum and Golgi. In terms of assembly, homodimer; in the endoplasmic reticulum and Golgi. Interacts with protein prM. Interacts with non-structural protein 1. As to quaternary structure, homodimer; Homohexamer when secreted. Interacts with envelope protein E. Interacts (via N-terminus) with serine protease NS3. In terms of assembly, forms a heterodimer with serine protease NS3. May form homooligomers. As to quaternary structure, forms a heterodimer with NS2B. Interacts with NS4B. Interacts with unphosphorylated RNA-directed RNA polymerase NS5; this interaction stimulates RNA-directed RNA polymerase NS5 guanylyltransferase activity. Interacts with host SHFL. Interacts with host MAVS; this interaction inhibits the synthesis of IFN-beta. Interacts with host SHFL. Interacts with host AUP1; the interaction occurs in the presence of Dengue virus NS4B and induces lipophagy which facilitates production of virus progeny particles. In terms of assembly, interacts with serine protease NS3. As to quaternary structure, homodimer. Interacts with host STAT2; this interaction inhibits the phosphorylation of the latter, and, when all viral proteins are present (polyprotein), targets STAT2 for degradation. Interacts with serine protease NS3. Interacts with host PAF1 complex; the interaction may prevent the recruitment of the PAF1 complex to interferon-responsive genes, and thus reduces the immune response. Specific enzymatic cleavages in vivo yield mature proteins. Cleavages in the lumen of endoplasmic reticulum are performed by host signal peptidase, whereas cleavages in the cytoplasmic side are performed by serine protease NS3. Signal cleavage at the 2K-4B site requires a prior NS3 protease-mediated cleavage at the 4A-2K site. In terms of processing, cleaved in post-Golgi vesicles by a host furin, releasing the mature small envelope protein M, and peptide pr. This cleavage is incomplete as up to 30% of viral particles still carry uncleaved prM. Post-translationally, N-glycosylated. N-glycosylated. The excreted form is glycosylated and this is required for efficient secretion of the protein from infected cells. In terms of processing, acetylated by host KAT5. Acetylation modulates NS3 RNA-binding and unwinding activities and plays an important positive role for viral replication. Post-translationally, sumoylation of RNA-directed RNA polymerase NS5 increases NS5 protein stability allowing proper viral RNA replication. Phosphorylated on serines residues. This phosphorylation may trigger NS5 nuclear localization.

The protein localises to the virion. The protein resides in the host nucleus. It localises to the host cytoplasm. Its subcellular location is the host perinuclear region. It is found in the secreted. The protein localises to the virion membrane. The protein resides in the host endoplasmic reticulum membrane. It localises to the host mitochondrion. The catalysed reaction is Selective hydrolysis of -Xaa-Xaa-|-Yaa- bonds in which each of the Xaa can be either Arg or Lys and Yaa can be either Ser or Ala.. It carries out the reaction RNA(n) + a ribonucleoside 5'-triphosphate = RNA(n+1) + diphosphate. It catalyses the reaction a ribonucleoside 5'-triphosphate + H2O = a ribonucleoside 5'-diphosphate + phosphate + H(+). The enzyme catalyses ATP + H2O = ADP + phosphate + H(+). The catalysed reaction is a 5'-end (5'-triphosphoguanosine)-ribonucleoside in mRNA + S-adenosyl-L-methionine = a 5'-end (N(7)-methyl 5'-triphosphoguanosine)-ribonucleoside in mRNA + S-adenosyl-L-homocysteine. It carries out the reaction a 5'-end (N(7)-methyl 5'-triphosphoguanosine)-ribonucleoside in mRNA + S-adenosyl-L-methionine = a 5'-end (N(7)-methyl 5'-triphosphoguanosine)-(2'-O-methyl-ribonucleoside) in mRNA + S-adenosyl-L-homocysteine + H(+). Functionally, plays a role in virus budding by binding to the cell membrane and gathering the viral RNA into a nucleocapsid that forms the core of a mature virus particle. During virus entry, may induce genome penetration into the host cytoplasm after hemifusion induced by the surface proteins. Can migrate to the cell nucleus where it modulates host functions. Overcomes the anti-viral effects of host EXOC1 by sequestering and degrading the latter through the proteasome degradation pathway. Its function is as follows. Inhibits RNA silencing by interfering with host Dicer. Prevents premature fusion activity of envelope proteins in trans-Golgi by binding to envelope protein E at pH6.0. After virion release in extracellular space, gets dissociated from E dimers. In terms of biological role, acts as a chaperone for envelope protein E during intracellular virion assembly by masking and inactivating envelope protein E fusion peptide. prM is the only viral peptide matured by host furin in the trans-Golgi network probably to avoid catastrophic activation of the viral fusion activity in acidic Golgi compartment prior to virion release. prM-E cleavage is inefficient, and many virions are only partially matured. These uncleaved prM would play a role in immune evasion. Functionally, may play a role in virus budding. Exerts cytotoxic effects by activating a mitochondrial apoptotic pathway through M ectodomain. May display a viroporin activity. Its function is as follows. Binds to host cell surface receptor and mediates fusion between viral and cellular membranes. Envelope protein is synthesized in the endoplasmic reticulum in the form of heterodimer with protein prM. They play a role in virion budding in the ER, and the newly formed immature particle is covered with 60 spikes composed of heterodimer between precursor prM and envelope protein E. The virion is transported to the Golgi apparatus where the low pH causes dissociation of PrM-E heterodimers and formation of E homodimers. prM-E cleavage is inefficient, and many virions are only partially matured. These uncleaved prM would play a role in immune evasion. Involved in immune evasion, pathogenesis and viral replication. Once cleaved off the polyprotein, is targeted to three destinations: the viral replication cycle, the plasma membrane and the extracellular compartment. Essential for viral replication. Required for formation of the replication complex and recruitment of other non-structural proteins to the ER-derived membrane structures. Excreted as a hexameric lipoparticle that plays a role against host immune response. Antagonizing the complement function. Binds to the host macrophages and dendritic cells. Inhibits signal transduction originating from Toll-like receptor 3 (TLR3). In terms of biological role, disrupts the host endothelial glycocalyx layer of host pulmonary microvascular endothelial cells, inducing degradation of sialic acid and shedding of heparan sulfate proteoglycans. NS1 induces expression of sialidases, heparanase, and activates cathepsin L, which activates heparanase via enzymatic cleavage. These effects are probably linked to the endothelial hyperpermeability observed in severe dengue disease. Functionally, component of the viral RNA replication complex that functions in virion assembly and antagonizes the host immune response. Its function is as follows. Required cofactor for the serine protease function of NS3. May have membrane-destabilizing activity and form viroporins. Displays three enzymatic activities: serine protease, NTPase and RNA helicase. NS3 serine protease, in association with NS2B, performs its autocleavage and cleaves the polyprotein at dibasic sites in the cytoplasm: C-prM, NS2A-NS2B, NS2B-NS3, NS3-NS4A, NS4A-2K and NS4B-NS5. NS3 RNA helicase binds RNA and unwinds dsRNA in the 3' to 5' direction. In terms of biological role, regulates the ATPase activity of the NS3 helicase activity. NS4A allows NS3 helicase to conserve energy during unwinding. Plays a role in the inhibition of the host innate immune response. Interacts with host MAVS and thereby prevents the interaction between RIGI and MAVS. In turn, IFN-beta production is impaired. Interacts with host AUP1 which mediates induction of lipophagy in host cells and facilitates production of virus progeny particles. Functionally, functions as a signal peptide for NS4B and is required for the interferon antagonism activity of the latter. Its function is as follows. Induces the formation of ER-derived membrane vesicles where the viral replication takes place. Inhibits interferon (IFN)-induced host STAT1 phosphorylation and nuclear translocation, thereby preventing the establishment of cellular antiviral state by blocking the IFN-alpha/beta pathway. Replicates the viral (+) and (-) RNA genome, and performs the capping of genomes in the cytoplasm. NS5 methylates viral RNA cap at guanine N-7 and ribose 2'-O positions. Besides its role in RNA genome replication, also prevents the establishment of cellular antiviral state by blocking the interferon-alpha/beta (IFN-alpha/beta) signaling pathway. Inhibits host TYK2 and STAT2 phosphorylation, thereby preventing activation of JAK-STAT signaling pathway. May reduce immune responses by preventing the recruitment of the host PAF1 complex to interferon-responsive genes. The polypeptide is Genome polyprotein (Aedes aegypti (Yellowfever mosquito)).